A 391-amino-acid chain; its full sequence is Phosphoglycerate kinase (391 aa).

Substrate contacts are provided by residues 21–23 (DLN), Arg-36, 59–62 (HLGR), Arg-113, and Arg-146. ATP-binding positions include Lys-197, Glu-319, and 345 to 348 (GGDT).

Belongs to the phosphoglycerate kinase family. In terms of assembly, monomer.

The protein localises to the cytoplasm. It carries out the reaction (2R)-3-phosphoglycerate + ATP = (2R)-3-phospho-glyceroyl phosphate + ADP. The protein operates within carbohydrate degradation; glycolysis; pyruvate from D-glyceraldehyde 3-phosphate: step 2/5. The sequence is that of Phosphoglycerate kinase from Shewanella sp. (strain MR-4).